We begin with the raw amino-acid sequence, 263 residues long: Acyl-[acyl-carrier-protein]--UDP-N-acetylglucosamine O-acyltransferase (263 aa).

It belongs to the transferase hexapeptide repeat family. LpxA subfamily. Homotrimer.

Its subcellular location is the cytoplasm. The enzyme catalyses a (3R)-hydroxyacyl-[ACP] + UDP-N-acetyl-alpha-D-glucosamine = a UDP-3-O-[(3R)-3-hydroxyacyl]-N-acetyl-alpha-D-glucosamine + holo-[ACP]. It participates in glycolipid biosynthesis; lipid IV(A) biosynthesis; lipid IV(A) from (3R)-3-hydroxytetradecanoyl-[acyl-carrier-protein] and UDP-N-acetyl-alpha-D-glucosamine: step 1/6. Its function is as follows. Involved in the biosynthesis of lipid A, a phosphorylated glycolipid that anchors the lipopolysaccharide to the outer membrane of the cell. This Campylobacter jejuni subsp. jejuni serotype O:23/36 (strain 81-176) protein is Acyl-[acyl-carrier-protein]--UDP-N-acetylglucosamine O-acyltransferase.